The sequence spans 310 residues: MSTPGAQEVLFRTGIAAVNSTNHLRVYFQDSHGSIRESLYESGWANGTAKNVIAKAKLGTPLAATSKELKNIRVYSLTEDNVLQEAAYDSGSGWYNGALAGAKFTVAPYSRIGSVFLAGTNALQLRIYAQKTDNTIQEYMWNGDGWKEGTNLGVALPGTGIGVTCWRYTDYDGPSIRVWFQTDNLKLVQRAYDPHTGWFKELTTIFDKAPPRCAIAATNFNPGKSSIYMRIYFVNSDNTIWQVCWDHGQGYHDKRTITPVIQGSEIAIISWEGPELRLYFQNGTYVSAISEWSWARHGSQLGRRALPPAE.

6 tandem repeats follow at residues 1-53 (MSTP…KNVI), 54-103 (AKAK…AGAK), 104-151 (FTVA…EGTN), 152-209 (LGVA…FDKA), 210-256 (PPRC…DKRT), and 257-310 (ITPV…PPAE). The 6 X approximate tandem repeats stretch occupies residues 1–310 (MSTPGAQEVL…LGRRALPPAE (310 aa)). Arginine 25, glutamate 37, tryptophan 44, arginine 73, glutamate 85, tryptophan 94, arginine 126, glutamate 138, tryptophan 146, arginine 177, glutamine 189, tryptophan 198, arginine 230, glutamine 242, arginine 277, and glutamate 291 together coordinate beta-L-fucose.

This sequence belongs to the fungal fucose-specific lectin family.

In terms of biological role, lectin that specifically binds to L-fucose and weakly reacts with mannose and N-acetyl-neuraminic acid. Has strongest preference for the alpha-1,6-fucosylated chain (core fucose) on glycoproteins among alpha-1,2-, alpha-1,3-, alpha-1,4-, and alpha-1,6-fucosylated chains. Binds to fucose residues of IgE in mice and human, causing antigen-independent IgE-mediated mast cell activation and anaphylactoid reactions in mice and is possibly implicated in allergic response to Aspergillus oryzae in humans. Induces secretion of pro-inflammatory cytokines IL6 and IL8 implicated in ocular diseases such as mycotic keratitis, probably through its interaction with host toll-like receptors TLR2 and TLR4, followed by up-regulation of pro-inflammatory cytokines. In Aspergillus oryzae (Yellow koji mold), this protein is Fucose-specific lectin.